The chain runs to 240 residues: UDP-2,3-diacylglucosamine hydrolase (240 aa).

5 residues coordinate Mn(2+): aspartate 8, histidine 10, aspartate 41, asparagine 78, and histidine 113. Asparagine 78 to arginine 79 lines the substrate pocket. Substrate-binding residues include aspartate 121, serine 159, asparagine 163, lysine 166, and histidine 194. Histidine 194 and histidine 196 together coordinate Mn(2+).

It belongs to the LpxH family. It depends on Mn(2+) as a cofactor.

Its subcellular location is the cell inner membrane. It catalyses the reaction UDP-2-N,3-O-bis[(3R)-3-hydroxytetradecanoyl]-alpha-D-glucosamine + H2O = 2-N,3-O-bis[(3R)-3-hydroxytetradecanoyl]-alpha-D-glucosaminyl 1-phosphate + UMP + 2 H(+). Its pathway is glycolipid biosynthesis; lipid IV(A) biosynthesis; lipid IV(A) from (3R)-3-hydroxytetradecanoyl-[acyl-carrier-protein] and UDP-N-acetyl-alpha-D-glucosamine: step 4/6. In terms of biological role, hydrolyzes the pyrophosphate bond of UDP-2,3-diacylglucosamine to yield 2,3-diacylglucosamine 1-phosphate (lipid X) and UMP by catalyzing the attack of water at the alpha-P atom. Involved in the biosynthesis of lipid A, a phosphorylated glycolipid that anchors the lipopolysaccharide to the outer membrane of the cell. The sequence is that of UDP-2,3-diacylglucosamine hydrolase from Shewanella baltica (strain OS223).